Reading from the N-terminus, the 147-residue chain is Hemoglobin subunit gamma (147 aa).

The region spanning 3–147 (NFTAEDKAAI…VASALASRYH (145 aa)) is the Globin domain. The heme b site is built by histidine 64 and histidine 93.

Belongs to the globin family. Heterotetramer of two alpha chains and two gamma chains in fetal hemoglobin (Hb F). Red blood cells.

Gamma chains make up the fetal hemoglobin F, in combination with alpha chains. The polypeptide is Hemoglobin subunit gamma (HBG) (Alouatta seniculus (Red howler monkey)).